We begin with the raw amino-acid sequence, 158 residues long: 2-C-methyl-D-erythritol 2,4-cyclodiphosphate synthase (158 aa).

The a divalent metal cation site is built by aspartate 9 and histidine 11. 4-CDP-2-C-methyl-D-erythritol 2-phosphate-binding positions include 9-11 and 35-36; these read DVH and HS. Histidine 43 is an a divalent metal cation binding site. Residues 57 to 59, 62 to 66, 133 to 136, phenylalanine 140, and arginine 143 contribute to the 4-CDP-2-C-methyl-D-erythritol 2-phosphate site; these read DIG, FPDTD, and TTTE.

It belongs to the IspF family. In terms of assembly, homotrimer. It depends on a divalent metal cation as a cofactor.

The catalysed reaction is 4-CDP-2-C-methyl-D-erythritol 2-phosphate = 2-C-methyl-D-erythritol 2,4-cyclic diphosphate + CMP. It participates in isoprenoid biosynthesis; isopentenyl diphosphate biosynthesis via DXP pathway; isopentenyl diphosphate from 1-deoxy-D-xylulose 5-phosphate: step 4/6. Functionally, involved in the biosynthesis of isopentenyl diphosphate (IPP) and dimethylallyl diphosphate (DMAPP), two major building blocks of isoprenoid compounds. Catalyzes the conversion of 4-diphosphocytidyl-2-C-methyl-D-erythritol 2-phosphate (CDP-ME2P) to 2-C-methyl-D-erythritol 2,4-cyclodiphosphate (ME-CPP) with a corresponding release of cytidine 5-monophosphate (CMP). In Actinobacillus pleuropneumoniae serotype 7 (strain AP76), this protein is 2-C-methyl-D-erythritol 2,4-cyclodiphosphate synthase.